Here is a 312-residue protein sequence, read N- to C-terminus: Olfactory receptor 2L13 (312 aa).

Residues 1-24 (MEKWNHTSNDFILLGLLPPNQTGI) are Extracellular-facing. N-linked (GlcNAc...) asparagine glycans are attached at residues N5 and N20. A helical membrane pass occupies residues 25–48 (FLLCLIILIFFLASVGNSAMIHLI). Residues 49-56 (HVDPRLHT) lie on the Cytoplasmic side of the membrane. A helical membrane pass occupies residues 57 to 78 (PMYFLLSQLSLMDLMYISTTVP). Over 79-99 (KMAYNFLSGQKGISFLGCGVQ) the chain is Extracellular. C96 and C188 are joined by a disulfide. A helical transmembrane segment spans residues 100 to 119 (SFFFLTMACSEGLLLTSMAY). The Cytoplasmic segment spans residues 120–138 (DRYLAICHSLYYPIRMSKM). A helical membrane pass occupies residues 139-157 (MCVKMIGGSWTLGSINSLA). The Extracellular segment spans residues 158–194 (HTVFALHIPYCRSRAIDHFFCDVPAMLLLACTDTWVY). The chain crosses the membrane as a helical span at residues 195–218 (EYMVFVSTSLFLLFPFIGITSSCG). Residues 219 to 235 (RVLFAVYHMHSKEGRKK) are Cytoplasmic-facing. Residues 236–258 (AFTTISTHLTVVIFYYAPFVYTY) form a helical membrane-spanning segment. At 259–271 (LRPRNLRSPAEDK) the chain is on the extracellular side. A helical transmembrane segment spans residues 272–291 (ILAVFYTILTPMLNPIIYSL). Over 292–312 (RNKEVLGAMRRVFGIFSFLKE) the chain is Cytoplasmic.

Belongs to the G-protein coupled receptor 1 family.

It localises to the cell membrane. Its function is as follows. Odorant receptor. The sequence is that of Olfactory receptor 2L13 (OR2L13) from Homo sapiens (Human).